We begin with the raw amino-acid sequence, 659 residues long: Hemocyanin subunit B (659 aa).

The signal sequence occupies residues 1–18; the sequence is MVAKWCVLAMCLLVAVGA. Residues H198, H202, and H232 each contribute to the Cu cation site. N318 carries an N-linked (GlcNAc...) asparagine glycan. Residues H353, H357, and H393 each contribute to the Cu cation site. Residues C562 and C609 are joined by a disulfide bond.

The protein belongs to the tyrosinase family. Hemocyanin subfamily. 36-chain polymer consisting of 6 hexamers, each of which includes 4 different chains, A, B, C and D. In terms of tissue distribution, hemolymph.

It localises to the secreted. The protein localises to the extracellular space. Functionally, hemocyanins are copper-containing oxygen carriers occurring freely dissolved in the hemolymph of many mollusks and arthropods. This Scutigera coleoptrata (House centipede) protein is Hemocyanin subunit B (HCB).